Consider the following 457-residue polypeptide: Multidrug resistance protein MdtK (457 aa).

A run of 12 helical transmembrane segments spans residues 11 to 31 (LLALAIPVVIAQLSQTAMGVV), 46 to 66 (AVAVGTSIWLPAILFGHGLLL), 93 to 113 (WLALCVSVLIMLVLYNSDHVI), 127 to 147 (AVGFLHAIMWGVPGYLFFQVL), 160 to 180 (GMVIGFVGLLVNIPINYIFIY), 188 to 208 (LGGVGCGVATASVYWVMFLMM), 243 to 263 (LPVALALFFEVTLFAVVALLV), 283 to 301 (LMFMLPMSLSVAATIRVGF), 316 to 336 (YTSMAVGLLLASVTAVFTIVF), 357 to 377 (LMLLAALYQLSDAVQVIGSGV), 387 to 407 (IFFITFTAYWLLGLPSGYLLG), and 418 to 438 (PAGFWIGFIIGLTAAAILMVL).

The protein belongs to the multi antimicrobial extrusion (MATE) (TC 2.A.66.1) family. MdtK subfamily.

It localises to the cell inner membrane. Functionally, multidrug efflux pump that functions probably as a Na(+)/drug antiporter. In Yersinia pseudotuberculosis serotype O:1b (strain IP 31758), this protein is Multidrug resistance protein MdtK.